The following is a 224-amino-acid chain: Phosphoribosylformylglycinamidine synthase subunit PurQ (224 aa).

Residues 2–224 (KVTILQFPGT…IKMLQGFLRA (223 aa)) form the Glutamine amidotransferase type-1 domain. The active-site Nucleophile is the cysteine 86. Active-site residues include histidine 200 and glutamate 202.

In terms of assembly, part of the FGAM synthase complex composed of 1 PurL, 1 PurQ and 2 PurS subunits.

Its subcellular location is the cytoplasm. The enzyme catalyses N(2)-formyl-N(1)-(5-phospho-beta-D-ribosyl)glycinamide + L-glutamine + ATP + H2O = 2-formamido-N(1)-(5-O-phospho-beta-D-ribosyl)acetamidine + L-glutamate + ADP + phosphate + H(+). It carries out the reaction L-glutamine + H2O = L-glutamate + NH4(+). It functions in the pathway purine metabolism; IMP biosynthesis via de novo pathway; 5-amino-1-(5-phospho-D-ribosyl)imidazole from N(2)-formyl-N(1)-(5-phospho-D-ribosyl)glycinamide: step 1/2. In terms of biological role, part of the phosphoribosylformylglycinamidine synthase complex involved in the purines biosynthetic pathway. Catalyzes the ATP-dependent conversion of formylglycinamide ribonucleotide (FGAR) and glutamine to yield formylglycinamidine ribonucleotide (FGAM) and glutamate. The FGAM synthase complex is composed of three subunits. PurQ produces an ammonia molecule by converting glutamine to glutamate. PurL transfers the ammonia molecule to FGAR to form FGAM in an ATP-dependent manner. PurS interacts with PurQ and PurL and is thought to assist in the transfer of the ammonia molecule from PurQ to PurL. This Sulfurimonas denitrificans (strain ATCC 33889 / DSM 1251) (Thiomicrospira denitrificans (strain ATCC 33889 / DSM 1251)) protein is Phosphoribosylformylglycinamidine synthase subunit PurQ.